The sequence spans 475 residues: MAKWMSVAQVKEKIKESSAEEVTAQYLDTIGKSKVNGYITVSEKALEQAKKIDVEGHNGPLAGVPIAIKDNISVVGLPNSCGSKILEDYIPPFNAYVIEKLLAAGAVILGKTNMDEFAMGSSTETSYFGPTANPWDLERVPGGSSGGSAAVVAAGEAPFALGSDTGGSVRCPAAFCGVVGLKPTYGAVSRYGVVAYANSLEQVGPLANNVTDIAVLMDVIAGYDRKDSTSIDSKTEYQKALIEDVKGLKIGVPKEFFGEGIHPDVEKAVWNAIHKCEDLGASWEEVSMPHIKYALASYYIIAMSEASSNLARFDGTRYGYRASGENWHAMVSKTRAEGFGTEVKRRILLGTYALSAGYHDKYYLKALKVRTLVKQDFDKALSKVDVLMAPTMPNPAFKIGEKIEDPLTLYLSDVNTCPINLAGVPSLSVPCGFTDGLPIGLQIMGKPFDEPAVLRAAYTFEQNTDYHTKRPPEVA.

Catalysis depends on charge relay system residues lysine 69 and serine 144. The active-site Acyl-ester intermediate is the serine 168.

This sequence belongs to the amidase family. GatA subfamily. In terms of assembly, heterotrimer of A, B and C subunits.

It catalyses the reaction L-glutamyl-tRNA(Gln) + L-glutamine + ATP + H2O = L-glutaminyl-tRNA(Gln) + L-glutamate + ADP + phosphate + H(+). Allows the formation of correctly charged Gln-tRNA(Gln) through the transamidation of misacylated Glu-tRNA(Gln) in organisms which lack glutaminyl-tRNA synthetase. The reaction takes place in the presence of glutamine and ATP through an activated gamma-phospho-Glu-tRNA(Gln). This Methanosarcina barkeri (strain Fusaro / DSM 804) protein is Glutamyl-tRNA(Gln) amidotransferase subunit A.